Consider the following 236-residue polypeptide: Probable chemoreceptor glutamine deamidase CheD (236 aa).

The segment at 1–20 (MIEFGKRATPQSAADAVRGD) is disordered.

The protein belongs to the CheD family.

The catalysed reaction is L-glutaminyl-[protein] + H2O = L-glutamyl-[protein] + NH4(+). In terms of biological role, probably deamidates glutamine residues to glutamate on methyl-accepting chemotaxis receptors (MCPs), playing an important role in chemotaxis. The polypeptide is Probable chemoreceptor glutamine deamidase CheD (Ralstonia pickettii (strain 12J)).